A 593-amino-acid chain; its full sequence is MPRGLELLIAQTILQGFDAQYGRFLEVTSGAQQRFEQADWHAVQQAMKSRIHLYDHHVGLVVEQLRCITDGKSTDADFLLRVKEHYTRLLPDYPRFEIAESFFNSVYCRLFDHRSLTPERLFIFSSQPERRFRTIPRPLAKDFFPDHGWEPLLMRILSDLPLCLPWQNKSRDIRYIIAHLTETLGEDALPRCHVQVANELFYRNKAAWLVGKLTTPDGTLPFLLPIHRTDEGELFVDTCLTTTAEASIVFGFARSYFMVYAPLPAALVEWLREILPGKTTAELYMAIGCQKHAKTESYREYLCYLAESDEKFIEAPGIRGMVMLVFTLPGFDRVFKIIKDKFAPQKEMSAAHVRACYQLVKEHDRVGRMADTQEFENFVLDKRQIDPALMALLRQEAPEKITDLGEHIVIRHLYIERRMVPLNIWLEQVEGQQLRDAIEEYGNAIRQLAAANIFPGDMLFKNFGVTRHGRVVFYDYDEICYMTEVNFRDIPPARYPEDELASEPWYSVSPGDVFPEEFRHWLCADPRIGPLFEEMHADLFRADYWRALQTRIKEGHVEDVYAYRRRQRFSVRYETDRRPDKAFAPPSGNVRRA.

ATP contacts are provided by residues 315 to 321 (APGIRGM) and Lys-336. Asp-371 is a catalytic residue.

It belongs to the AceK family.

It localises to the cytoplasm. It catalyses the reaction L-seryl-[isocitrate dehydrogenase] + ATP = O-phospho-L-seryl-[isocitrate dehydrogenase] + ADP + H(+). In terms of biological role, bifunctional enzyme which can phosphorylate or dephosphorylate isocitrate dehydrogenase (IDH) on a specific serine residue. This is a regulatory mechanism which enables bacteria to bypass the Krebs cycle via the glyoxylate shunt in response to the source of carbon. When bacteria are grown on glucose, IDH is fully active and unphosphorylated, but when grown on acetate or ethanol, the activity of IDH declines drastically concomitant with its phosphorylation. This is Isocitrate dehydrogenase kinase/phosphatase from Salmonella typhi.